The following is a 201-amino-acid chain: Recombination protein RecR (201 aa).

The segment at 59-74 (CSRCQNFCEAELCSIC) adopts a C4-type zinc-finger fold. Positions 82–177 (RVLCVVESPT…PVSRIAHGIP (96 aa)) constitute a Toprim domain.

It belongs to the RecR family.

Its function is as follows. May play a role in DNA repair. It seems to be involved in an RecBC-independent recombinational process of DNA repair. It may act with RecF and RecO. This chain is Recombination protein RecR, found in Hahella chejuensis (strain KCTC 2396).